Here is a 91-residue protein sequence, read N- to C-terminus: DNA-binding protein HU (91 aa).

This sequence belongs to the bacterial histone-like protein family. In terms of assembly, homodimer.

Histone-like DNA-binding protein which is capable of wrapping DNA to stabilize it, and thus to prevent its denaturation under extreme environmental conditions. This chain is DNA-binding protein HU (hup), found in Streptococcus thermophilus.